A 157-amino-acid polypeptide reads, in one-letter code: Small ribosomal subunit protein uS7 (157 aa).

The protein belongs to the universal ribosomal protein uS7 family. Part of the 30S ribosomal subunit. Contacts proteins S9 and S11.

Its function is as follows. One of the primary rRNA binding proteins, it binds directly to 16S rRNA where it nucleates assembly of the head domain of the 30S subunit. Is located at the subunit interface close to the decoding center, probably blocks exit of the E-site tRNA. In Chlamydia trachomatis serovar L2 (strain ATCC VR-902B / DSM 19102 / 434/Bu), this protein is Small ribosomal subunit protein uS7.